A 167-amino-acid chain; its full sequence is uncharacterized protein (167 aa).

The span at 1–13 (MQGDIRRKKDLLP) shows a compositional bias: basic and acidic residues. Disordered regions lie at residues 1-26 (MQGD…SRRR) and 67-167 (ESHS…ILDN). Residues 71-80 (SDVSASASDH) are compositionally biased toward low complexity. The segment covering 102–156 (VPKEKFNNEVAKQQEVKNLENDLKPQIDSEKQKQINKDKKEQKQQLQKEKQDLAK) has biased composition (basic and acidic residues).

This is an uncharacterized protein from Saccharomyces cerevisiae (strain ATCC 204508 / S288c) (Baker's yeast).